A 94-amino-acid chain; its full sequence is RING finger protein Z (94 aa).

Positions 1–19 (MGNCNGASKSNQPDSSRVT) are enriched in polar residues. A disordered region spans residues 1-20 (MGNCNGASKSNQPDSSRVTQ). Glycine 2 carries N-myristoyl glycine; by host lipidation. An RING-type; atypical zinc finger spans residues 39–75 (CKCCWFADTNLITCNDHYLCLRCHQVMLRNSDLCNIC). Residues 89–92 (PTAP) carry the PTAP/PSAP motif motif.

It belongs to the arenaviridae Z protein family. In terms of assembly, interacts with protein NP; this interaction probably directs the encapsidated genome to budding sites. Interacts (via RING domain) with polymerase L; this interaction inhibits viral transcription and replication, Z partially blocks the product exit tunnel for the releasing nascent RNA product. Interacts with the glycoprotein complex; this interaction plays a role in virion budding. Interacts with host eIF4E; this interaction results in eIF4E reduced affinity for its substrate, the 5'-m7 G cap structure. Interacts (via late-budding domain) with host TSG101; this interaction is essential for budding and release of viral particles. Interacts with host RPLP0; this interaction may serve to load ribosome-like particles inside the virion. Interacts with host PML; this interaction induces PML bodies redistribution in the cytoplasm upon viral infection. Myristoylation is required for the role of RING finger protein Z in assembly and budding.

The protein resides in the virion. It localises to the host cytoplasm. The protein localises to the host perinuclear region. It is found in the host cell membrane. Its function is as follows. Plays a crucial role in virion assembly and budding. Expressed late in the virus life cycle, it acts as an inhibitor of viral transcription and RNA synthesis by interacting with the viral polymerase L. Presumably recruits the NP encapsidated genome to cellular membranes at budding sites via direct interaction with NP. Plays critical roles in the final steps of viral release by interacting with host TSG101, a member of the vacuolar protein-sorting pathway and using other cellular host proteins involved in vesicle formation pathway. The budding of the virus progeny occurs after association of protein Z with the viral glycoprotein complex SSP-GP1-GP2 at the cell periphery, step that requires myristoylation of protein Z. Also selectively represses protein production by associating with host eIF4E. In cell-based minigenome assay, has an inhibitory effect on the ribonucleoprotein machinery (vRNP), which is responsible for the replication and transcription of the viral genome. This chain is RING finger protein Z, found in Akodon azarae (Azara's grass mouse).